The chain runs to 481 residues: Aspartyl/glutamyl-tRNA(Asn/Gln) amidotransferase subunit B (481 aa).

Belongs to the GatB/GatE family. GatB subfamily. In terms of assembly, heterotrimer of A, B and C subunits.

The catalysed reaction is L-glutamyl-tRNA(Gln) + L-glutamine + ATP + H2O = L-glutaminyl-tRNA(Gln) + L-glutamate + ADP + phosphate + H(+). It carries out the reaction L-aspartyl-tRNA(Asn) + L-glutamine + ATP + H2O = L-asparaginyl-tRNA(Asn) + L-glutamate + ADP + phosphate + 2 H(+). Functionally, allows the formation of correctly charged Asn-tRNA(Asn) or Gln-tRNA(Gln) through the transamidation of misacylated Asp-tRNA(Asn) or Glu-tRNA(Gln) in organisms which lack either or both of asparaginyl-tRNA or glutaminyl-tRNA synthetases. The reaction takes place in the presence of glutamine and ATP through an activated phospho-Asp-tRNA(Asn) or phospho-Glu-tRNA(Gln). The polypeptide is Aspartyl/glutamyl-tRNA(Asn/Gln) amidotransferase subunit B (Pseudomonas fluorescens (strain SBW25)).